Consider the following 187-residue polypeptide: Protein GrpE (187 aa).

Residues 1 to 30 (MEKKETKNETEKTNKQDNKNTKSQKKENLN) are disordered.

It belongs to the GrpE family. As to quaternary structure, homodimer.

The protein resides in the cytoplasm. In terms of biological role, participates actively in the response to hyperosmotic and heat shock by preventing the aggregation of stress-denatured proteins, in association with DnaK and GrpE. It is the nucleotide exchange factor for DnaK and may function as a thermosensor. Unfolded proteins bind initially to DnaJ; upon interaction with the DnaJ-bound protein, DnaK hydrolyzes its bound ATP, resulting in the formation of a stable complex. GrpE releases ADP from DnaK; ATP binding to DnaK triggers the release of the substrate protein, thus completing the reaction cycle. Several rounds of ATP-dependent interactions between DnaJ, DnaK and GrpE are required for fully efficient folding. The protein is Protein GrpE of Borreliella afzelii (strain PKo) (Borrelia afzelii).